We begin with the raw amino-acid sequence, 93 residues long: Putative septation protein SpoVG (93 aa).

It belongs to the SpoVG family.

In terms of biological role, could be involved in septation. This is Putative septation protein SpoVG from Lachnoclostridium phytofermentans (strain ATCC 700394 / DSM 18823 / ISDg) (Clostridium phytofermentans).